Reading from the N-terminus, the 161-residue chain is Large ribosomal subunit protein uL16 (161 aa).

The segment at 140-161 is disordered; that stretch reads LNKGNYKPAKTPVTADDSESSS.

The protein belongs to the universal ribosomal protein uL16 family. In terms of assembly, part of the 50S ribosomal subunit.

Its function is as follows. Binds 23S rRNA and is also seen to make contacts with the A and possibly P site tRNAs. In Prochlorococcus marinus (strain NATL1A), this protein is Large ribosomal subunit protein uL16.